Here is a 340-residue protein sequence, read N- to C-terminus: Sideroflexin-5 (340 aa).

4 helical membrane-spanning segments follow: residues 103 to 123, 163 to 183, 254 to 274, and 287 to 307; these read IFMPFRMSGYIPFGTPIVVGL, FIQGYLGAVISAVSIAVGLNV, LTRVVLPMPILVLPPIVMSML, and LLPVQSLVCLAAFGLALPLAI.

This sequence belongs to the sideroflexin family. Primarily expressed in the brain.

It is found in the mitochondrion inner membrane. The enzyme catalyses citrate(in) = citrate(out). Functionally, mitochondrial amino-acid transporter. Transports citrate. Does not act as a serine transporter: not able to mediate transport of serine into mitochondria. In brown adipose tissue, plays a role in the regulation of UCP1-dependent thermogenesis probably by supporting mitochondrial glycerol-3-phosphate utilization. The chain is Sideroflexin-5 from Homo sapiens (Human).